The following is a 74-amino-acid chain: Large ribosomal subunit protein bL31 (74 aa).

This sequence belongs to the bacterial ribosomal protein bL31 family. Type A subfamily. Part of the 50S ribosomal subunit.

Binds the 23S rRNA. The polypeptide is Large ribosomal subunit protein bL31 (Synechococcus sp. (strain JA-2-3B'a(2-13)) (Cyanobacteria bacterium Yellowstone B-Prime)).